The following is a 185-amino-acid chain: MIDETLFDAEEKMEKAVAVARDDLASIRTGRANPGMFNRIHVDYYGAVTPITQLSSINVPEARMVVIKPYEASQLRPIEDAIRNSDLGVNPTNDGNVIRVSIPQLTEERRRDLVKQAKGKGEDAKVSVRNIRRKAMEELTRIKKDGDAGEDDVARAEKDLDKTTQQYTHQIDELVKHKEGELLEV.

This sequence belongs to the RRF family.

The protein localises to the cytoplasm. In terms of biological role, responsible for the release of ribosomes from messenger RNA at the termination of protein biosynthesis. May increase the efficiency of translation by recycling ribosomes from one round of translation to another. In Mycolicibacterium vanbaalenii (strain DSM 7251 / JCM 13017 / BCRC 16820 / KCTC 9966 / NRRL B-24157 / PYR-1) (Mycobacterium vanbaalenii), this protein is Ribosome-recycling factor.